The chain runs to 430 residues: Drebrin-like protein (430 aa).

The region spanning 4-133 (NLSRNGPALQ…EPECIMEKVA (130 aa)) is the ADF-H domain. Thr26 carries the post-translational modification Phosphothreonine. Phosphoserine occurs at positions 137 and 160. Lys176 is modified (N6-acetyllysine). A coiled-coil region spans residues 176–231 (KDSFWAKAEKEEENRRLEEKRRAEEAQRQLEQERRERELREAARREQRYQEQGGEA). Ala183 and Ser232 each carry phosphoserine. The tract at residues 219-283 (RREQRYQEQG…SSPQPGKLRS (65 aa)) is disordered. Residues 233-244 (PQRTWEQQQEVV) show a composition bias toward polar residues. Residues 245–267 (SRNRNEQESAVHPREIFKQKERA) are compositionally biased toward basic and acidic residues. A compositionally biased stretch (polar residues) spans 268–277 (MSTTSISSPQ). Phosphoserine occurs at positions 269, 272, 275, and 283. Lys288 is subject to N6-acetyllysine. At Thr291 the chain carries Phosphothreonine. 2 positions are modified to phosphotyrosine: Tyr334 and Tyr344. One can recognise an SH3 domain in the interval 371–430 (GQGLCARALYDYQAADDTEISFDPENLITGIEVIDEGWWRGYGPDGHFGMFPANYVELIE).

This sequence belongs to the ABP1 family. As to quaternary structure, interacts with SHANK2, SHANK3 and SYN1. Interacts with FGD1 and DNM1. Interacts with ANKRD54. Interacts with COBL. Interacts with WASL and WIPF1. Interacts with MAP4K1 and PRAM1. Degraded by caspases during apoptosis.

It is found in the cytoplasm. Its subcellular location is the cytoskeleton. It localises to the cell projection. The protein resides in the lamellipodium. The protein localises to the ruffle. It is found in the cell cortex. Its subcellular location is the cytosol. It localises to the synapse. The protein resides in the perikaryon. The protein localises to the neuron projection. It is found in the cell membrane. Its subcellular location is the cytoplasmic vesicle. It localises to the clathrin-coated vesicle membrane. The protein resides in the golgi apparatus membrane. The protein localises to the podosome. It is found in the early endosome. Its subcellular location is the dendrite. It localises to the postsynaptic density. Adapter protein that binds F-actin and DNM1, and thereby plays a role in receptor-mediated endocytosis. Plays a role in the reorganization of the actin cytoskeleton, formation of cell projections, such as neurites, in neuron morphogenesis and synapse formation via its interaction with WASL and COBL. Does not bind G-actin and promote actin polymerization by itself. Required for the formation of organized podosome rosettes. May act as a common effector of antigen receptor-signaling pathways in leukocytes. Acts as a key component of the immunological synapse that regulates T-cell activation by bridging TCRs and the actin cytoskeleton to gene activation and endocytic processes. In Homo sapiens (Human), this protein is Drebrin-like protein (DBNL).